Consider the following 567-residue polypeptide: NADH-ubiquinone oxidoreductase chain 2 (567 aa).

14 helical membrane passes run 2-22 (LILSLFILIIYSSIINNIDTI), 43-63 (IGIIIILYSLYIFKDISLSYI), 85-105 (NIFNIYIIFLLLIVIISLLSI), 133-153 (LNIYYISIIIFNIIGLILLLT), 158-178 (ISIFISIELQSYSLYILTGII), 189-209 (LFYYLIGGIGSIIILYGISLL), 236-256 (ILIGWLFIIIGLLIKIGAAPM), 274-294 (YISLIPKISILSYILLIILNL), 312-332 (LIYILSIIIILSLIIGSIGGL), 340-360 (ILAYSGLLNIGYFLLIILSLI), 372-392 (IIYITQYCFNHISIFILLIIA), 423-443 (LIFCLIIIIGSFIGIPPLFGF), 459-479 (LFLSLLLIISSIISSIYYLYF), and 530-550 (VGNYITYILSSYILIILFNFI).

Belongs to the complex I subunit 2 family.

The protein resides in the mitochondrion inner membrane. The enzyme catalyses a ubiquinone + NADH + 5 H(+)(in) = a ubiquinol + NAD(+) + 4 H(+)(out). Core subunit of the mitochondrial membrane respiratory chain NADH dehydrogenase (Complex I) that is believed to belong to the minimal assembly required for catalysis. Complex I functions in the transfer of electrons from NADH to the respiratory chain. The immediate electron acceptor for the enzyme is believed to be ubiquinone. The sequence is that of NADH-ubiquinone oxidoreductase chain 2 (ND2) from Wickerhamomyces canadensis (Yeast).